Here is a 150-residue protein sequence, read N- to C-terminus: Histone H3-like centromeric protein A (150 aa).

The segment at 1-56 (MRPGSTPASRRKSRPPRRVSPPLPTTSTRSPGRPSAPEQRKAPRATPKKRFRPGTR) is disordered. A compositionally biased stretch (low complexity) spans 25 to 37 (TTSTRSPGRPSAP). Positions 42–53 (APRATPKKRFRP) are enriched in basic residues. The H3-like stretch occupies residues 53–150 (PGTRALMEIR…RIRGVTEGLG (98 aa)).

It belongs to the histone H3 family. Component of centromeric nucleosomes, where DNA is wrapped around a histone octamer core. The octamer contains two molecules each of H2A, H2B, CENPA and H4 assembled in one CENPA-H4 heterotetramer and two H2A-H2B heterodimers. CENPA modulates the DNA-binding characteristics of nucleosomes so that protruding DNA ends have higher flexibility than in nucleosomes containing conventional histone H3.

The protein resides in the nucleus. The protein localises to the chromosome. It localises to the centromere. Its function is as follows. Histone H3-like nucleosomal protein that is specifically found in centromeric nucleosomes. Replaces conventional H3 in the nucleosome core of centromeric chromatin that serves as an assembly site for the inner kinetochore. The presence of CENPA subtly modifies the nucleosome structure and the way DNA is wrapped around the nucleosome and gives rise to protruding DNA ends that are less well-ordered and rigid compared to nucleosomes containing histone H3. May serve as an epigenetic mark that propagates centromere identity through replication and cell division. Required for recruitment and assembly of kinetochore proteins, and as a consequence required for progress through mitosis, chromosome segregation and cytokinesis. The protein is Histone H3-like centromeric protein A (cenpa) of Xenopus tropicalis (Western clawed frog).